The sequence spans 496 residues: Glycylpeptide N-tetradecanoyltransferase 1 (496 aa).

The tract at residues 1 to 82 (MADESETAVK…STQDQPVKMT (82 aa)) is disordered. A phosphoserine mark is found at serine 31 and serine 47. Positions 55–66 (KKKKKKQKKKKE) are enriched in basic residues. Serine 83 bears the Phosphoserine mark. Tetradecanoyl-CoA-binding residues include glutamine 118, phenylalanine 119, tryptophan 120, phenylalanine 247, leucine 248, cysteine 249, valine 250, serine 256, arginine 258, valine 259, and alanine 260.

It belongs to the NMT family. As to expression, ubiquitous.

The protein localises to the cytoplasm. Its subcellular location is the cytosol. The protein resides in the membrane. The enzyme catalyses N-terminal glycyl-[protein] + tetradecanoyl-CoA = N-tetradecanoylglycyl-[protein] + CoA + H(+). It catalyses the reaction N-terminal glycyl-L-lysyl-[protein] + tetradecanoyl-CoA = N-terminal glycyl-(N(6)-tetradecanoyl)-L-lysyl-[protein] + CoA + H(+). Adds a myristoyl group to the N-terminal glycine residue of certain cellular and viral proteins. Also able to mediate N-terminal lysine myristoylation of proteins: catalyzes myristoylation of ARF6 on both 'Gly-2' and 'Lys-3'. Lysine myristoylation is required to maintain ARF6 on membranes during the GTPase cycle. Required for normal embryogenesis. The polypeptide is Glycylpeptide N-tetradecanoyltransferase 1 (Mus musculus (Mouse)).